Consider the following 435-residue polypeptide: MKSTPKLLLLLLFIINHHVDSGSIVKFLPGFEGPLPFELETGYIGIGEEEDVQLFYYFIKSERNPKEDPLLLWLSGGPGCSSITGLLFENGPLALKSKVYNGSVPSLVSTTYSWTKTANIIFLDQPIGAGFSYSRIPLIDTPSDTGEVKNIHEFLQKWLSKHPQFSSNPFYASGDSYSGMIVPALVQEISKGNYICCKPPINLQGYILGNPITYFEVDQNYRIPFSHGMALISDELYESIRRDCKGNYFNVDPRNTKCLKLVEEYHKCTDELNEFNILSPDCDTTSPDCFLYPYYLLGYWINDESVRDALHVNKSSIGKWERCTYQNRIPYNKDINNSIPYHMNNSISGYRSLIYSGDHDLVVPFLATQAWIKSLNYSIIHEWRPWMIKDQIAGYTRTYSNKMTFATVKGSGHTAEYKPNETFIMFQRWISGHDL.

Positions 1 to 21 (MKSTPKLLLLLLFIINHHVDS) are cleaved as a signal peptide. 3 disulfides stabilise this stretch: C80–C323, C244–C258, and C282–C289. The N-linked (GlcNAc...) asparagine glycan is linked to N101. Residue S176 is part of the active site. 3 N-linked (GlcNAc...) asparagine glycosylation sites follow: N313, N336, and N344. Residue D360 is part of the active site. N376 carries N-linked (GlcNAc...) asparagine glycosylation. H413 is an active-site residue. The N-linked (GlcNAc...) asparagine glycan is linked to N420.

Belongs to the peptidase S10 family. In terms of tissue distribution, expressed in roots.

Its subcellular location is the secreted. Its function is as follows. Probable carboxypeptidase. The chain is Serine carboxypeptidase-like 12 (SCPL12) from Arabidopsis thaliana (Mouse-ear cress).